A 387-amino-acid chain; its full sequence is Oxidase FUB9 (387 aa).

Residues 1 to 20 are disordered; the sequence is MSRTNLPIQPAKMSDATSSK. The FMN hydroxy acid dehydrogenase domain maps to 18–379; the sequence is SSKPQIFSIQ…TPAHLSILNA (362 aa). Tyr44 contributes to the a 2-oxocarboxylate binding site. FMN-binding residues include Ser126, Gln150, and Thr178. Arg187 serves as a coordination point for a 2-oxocarboxylate. Lys250 provides a ligand contact to FMN. The active-site Proton acceptor is His274. Residue Arg277 coordinates a 2-oxocarboxylate. FMN is bound by residues 305-309 and 328-329; these read DGGFR and GR.

Belongs to the FMN-dependent alpha-hydroxy acid dehydrogenase family. The cofactor is FMN.

Its pathway is mycotoxin biosynthesis. Its function is as follows. Oxidase; part of the gene cluster that mediates the biosynthesis of fusaric acid, a mycotoxin with low to moderate toxicity to animals and humans, but with high phytotoxic properties. L-aspartate is suggested as fusaric acid amino acid precursor that is activated and further processed to O-acetyl-L-homoserine by cluster enzymes aspartate kinase FUB3 and homoserine O-acetyltransferase FUB5, as well as enzymes of the primary metabolism. The polyketide synthase (PKS) FUB1 generates the triketide trans-2-hexenal which is presumptively released by the hydrolase FUB4 and linked to the NRPS-bound amino acid precursor by NAD(P)-dependent dehydrogenase FUB6. FUB1, FUB4, and the non-canonical NRPS Fub8 may form an enzyme complex. Further processing of the NRPS-bound intermediate might be carried out by FUB6 and the sulfhydrylase FUB7, enabling a spontaneous electrocyclization to close the carbon backbone of fusaric acid. Dihydrofusaric acid is likely to be released via reduction by the thioester reductase (TR) domain of FUB8 whereupon the final oxidation to fusaric acid may (also) be performed by the FMN-dependent dehydrogenase FUB9. The chain is Oxidase FUB9 from Fusarium oxysporum f. sp. lycopersici (strain 4287 / CBS 123668 / FGSC 9935 / NRRL 34936) (Fusarium vascular wilt of tomato).